We begin with the raw amino-acid sequence, 478 residues long: tRNA modification GTPase MnmE (478 aa).

(6S)-5-formyl-5,6,7,8-tetrahydrofolate contacts are provided by R36, E94, and K133. In terms of domain architecture, TrmE-type G spans 230–402 (GIHVVLAGRP…LVETLCAKVG (173 aa)). A K(+)-binding site is contributed by N240. Residues 240-245 (NAGKSS), 259-265 (TDVAGTT), and 284-287 (DTAG) contribute to the GTP site. S244 is a Mg(2+) binding site. T259, V261, and T264 together coordinate K(+). T265 contacts Mg(2+). A (6S)-5-formyl-5,6,7,8-tetrahydrofolate-binding site is contributed by K478.

It belongs to the TRAFAC class TrmE-Era-EngA-EngB-Septin-like GTPase superfamily. TrmE GTPase family. In terms of assembly, homodimer. Heterotetramer of two MnmE and two MnmG subunits. It depends on K(+) as a cofactor.

It is found in the cytoplasm. In terms of biological role, exhibits a very high intrinsic GTPase hydrolysis rate. Involved in the addition of a carboxymethylaminomethyl (cmnm) group at the wobble position (U34) of certain tRNAs, forming tRNA-cmnm(5)s(2)U34. This Psychrobacter arcticus (strain DSM 17307 / VKM B-2377 / 273-4) protein is tRNA modification GTPase MnmE.